The following is a 148-amino-acid chain: Caltractin (148 aa).

EF-hand domains lie at 4 to 39, 40 to 75, 77 to 112, and 113 to 148; these read EQKQ…LGFE, PKKE…KMGE, DSRE…LGEN, and MTDE…TSLF. Ca(2+) contacts are provided by aspartate 17, aspartate 19, serine 21, threonine 23, glutamate 28, aspartate 53, aspartate 55, serine 57, threonine 59, and glutamate 64. The Ca(2+) site is built by aspartate 126, aspartate 128, aspartate 130, glutamate 132, and glutamate 137.

The protein belongs to the centrin family. Ubiquitous.

In terms of biological role, this calcium-binding protein is found in the basal body complexes (the functional homolog of the centrosome in animal cell). In mitotic cells it is specifically associated with the poles of the mitotic spindles at the sites of the duplicated basal body complexes. The sequence is that of Caltractin from Tetraselmis striata (Green microalga).